We begin with the raw amino-acid sequence, 654 residues long: Bifunctional 3'-phosphoadenosine 5'-phosphosulfate synthase pps-1 (654 aa).

The interval 1-26 (MLTPRDENNEGDAMPMLKKPRYSSLS) is disordered. Residues 1–231 (MLTPRDENNE…VLDHLESKGL (231 aa)) form an adenylyl-sulfate kinase region. 66-71 (GAGKTT) contacts ATP. Adenosine 5'-phosphosulfate is bound by residues 93–96 (DNIR), Phe-105, 110–113 (RQEN), 136–137 (IS), Lys-175, and 190–191 (GF). ATP is bound by residues Cys-218, 449–452 (QLRN), 550–554 (GRDPA), and Ala-592. The sulfate adenylyltransferase stretch occupies residues 242-653 (VRELFVSDDL…AGYYKSLQNS (412 aa)).

The protein in the N-terminal section; belongs to the APS kinase family. In the C-terminal section; belongs to the sulfate adenylyltransferase family.

The protein resides in the nucleus. The enzyme catalyses sulfate + ATP + H(+) = adenosine 5'-phosphosulfate + diphosphate. It carries out the reaction adenosine 5'-phosphosulfate + ATP = 3'-phosphoadenylyl sulfate + ADP + H(+). It functions in the pathway sulfur metabolism; sulfate assimilation. In terms of biological role, bifunctional enzyme with both ATP sulfurylase and APS kinase activity, which mediates two steps in the sulfate activation pathway. The first step is the transfer of a sulfate group to ATP to yield adenosine 5'-phosphosulfate (APS), and the second step is the transfer of a phosphate group from ATP to APS yielding 3'-phosphoadenylylsulfate (PAPS: activated sulfate donor used by sulfotransferase). Required for normal growth and development. Involved in several aspects of both embryonic and postembryonic development, including molting, changes in cell shape, and patterning of epithelial and muscle cells. This Caenorhabditis elegans protein is Bifunctional 3'-phosphoadenosine 5'-phosphosulfate synthase pps-1.